Consider the following 279-residue polypeptide: MAFIQEIKRKMTTVQSTIKITNAMKMVSRAKFVRFKKQFKEVNYFFNEFYKAVGQVVLSLKKMPKPLENPKTLWVMMSSSLGLCGQHNTNMNKLLQTKFQPGDKIFFLGRKNQSFWNKGDTDNPTVGYVDIQDRDLSFDYCQQVSDQIMEQFDLHQLDRICIIYTQFKNPLIQHANSFQVFPFDVAMFKAFNPVKMEQKLDFEPDEETIIKLISPQFFDIALYGGLVETKLCESASRQNAMDAAAKNAKDLYEKYSIQFNKLRQNSITQEIIEIIGGIS.

Belongs to the ATPase gamma chain family. F-type ATPases have 2 components, CF(1) - the catalytic core - and CF(0) - the membrane proton channel. CF(1) has five subunits: alpha(3), beta(3), gamma(1), delta(1), epsilon(1). CF(0) has three main subunits: a, b and c.

The protein localises to the cell membrane. Its function is as follows. Produces ATP from ADP in the presence of a proton gradient across the membrane. The gamma chain is believed to be important in regulating ATPase activity and the flow of protons through the CF(0) complex. In Mycoplasma pneumoniae (strain ATCC 29342 / M129 / Subtype 1) (Mycoplasmoides pneumoniae), this protein is ATP synthase gamma chain.